The chain runs to 492 residues: MTLWINGDWITGQGERRRKTNPVSAEILWQGNDANAAQVAEACQAARAAFPRWARQPFTARQAIVQKFAALLEAHKADLTEVIARETGKPRWEAATEVTAMINKIAISIKAYHARTGEQKSELVDGAATLRHRPHGVLAVFGPYNFPGHLPNGHIVSALLAGNTLIFKPSELTPWTGETVIKLWERAGLPAGVLNLVQGGRETGQALSSLDDLDGLLFTGSASTGYQLHRQLSGQPEKILALEMGGNNPLIIEDVANIDAAVHLTLQSAFITAGQRCTCARRLLVKQGAQVDAFLARLVDVAGRLQPGRWDDDPQSFIGGLISAQAAQHVMEAWRQREALGGRTLLASRKVKEGTSLLTPGIIELTGVADVPDEEVFGPLLNVWRYAHFDEAIRLANNTRFGLSCGLVSTDRAQFEQLLLEARAGIVNWNKPLTGAASTAPFGGVGASGNHRPSAWYAADYCAWPMASLESPELTLPATLSPGLDFSRREAV.

Residue G220–G225 participates in NAD(+) binding. Residues E243 and C277 contribute to the active site.

Belongs to the aldehyde dehydrogenase family. AstD subfamily.

The catalysed reaction is N-succinyl-L-glutamate 5-semialdehyde + NAD(+) + H2O = N-succinyl-L-glutamate + NADH + 2 H(+). Its pathway is amino-acid degradation; L-arginine degradation via AST pathway; L-glutamate and succinate from L-arginine: step 4/5. In terms of biological role, catalyzes the NAD-dependent reduction of succinylglutamate semialdehyde into succinylglutamate. In Salmonella paratyphi A (strain AKU_12601), this protein is N-succinylglutamate 5-semialdehyde dehydrogenase.